A 1139-amino-acid chain; its full sequence is Retinoblastoma-like protein 2 (1139 aa).

The disordered stretch occupies residues 1-45 (MPSGGDQSPPPPPPPPAAAASDEEEEDDGEAEDAAPPAESPTPQI). The segment covering 8-17 (SPPPPPPPPA) has biased composition (pro residues). Acidic residues predominate over residues 21 to 33 (SDEEEEDDGEAED). A Phosphoserine modification is found at Ser-413. Position 417 is a phosphothreonine (Thr-417). The tract at residues 417-616 (TPVSTATHSL…EKIRDNENRV (200 aa)) is domain A. Residues 417-1024 (TPVSTATHSL…KQIKTFAMKY (608 aa)) are pocket; binds E1A. An O-linked (GlcNAc) serine glycan is attached at Ser-420. The interval 617-827 (PTCEEVMPPQ…KQGQSVTSSS (211 aa)) is spacer. The residue at position 639 (Ser-639) is a Phosphoserine. Thr-642 carries the post-translational modification Phosphothreonine. Residues 654 to 678 (GGLGRSITSPTTLYDRYSSPPASTT) form a disordered region. A phosphoserine mark is found at Ser-662, Ser-672, and Ser-688. Residues 810 to 827 (ISPGGQQQKQGQSVTSSS) are compositionally biased toward low complexity. 2 disordered regions span residues 810–831 (ISPGGQQQKQGQSVTSSSNRPR) and 933–999 (KGKR…DMEE). Residues 828–1024 (NRPRKTSSLS…KQIKTFAMKY (197 aa)) form a domain B region. Positions 941-955 (SGSSDSRSHQNSPTE) are enriched in polar residues. 6 positions are modified to phosphoserine: Ser-948, Ser-952, Ser-966, Ser-971, Ser-972, and Ser-973. A compositionally biased stretch (low complexity) spans 964–973 (DSSPVMRSSS). Residue Thr-974 is modified to Phosphothreonine. Positions 977–987 (VPQPSSAPPTP) are enriched in pro residues. Residues Ser-981 and Ser-982 each carry the phosphoserine modification. Residue Thr-986 is modified to Phosphothreonine. 4 positions are modified to phosphoserine: Ser-1035, Ser-1068, Ser-1080, and Ser-1112.

It belongs to the retinoblastoma protein (RB) family. Interacts with AATF. Interacts with KMT5B, KMT5C and USP4. Component of the DREAM complex (also named LINC complex) at least composed of E2F4, E2F5, LIN9, LIN37, LIN52, LIN54, MYBL1, MYBL2, RBL1, RBL2, RBBP4, TFDP1 and TFDP2. The complex exists in quiescent cells where it represses cell cycle-dependent genes. It dissociates in S phase when LIN9, LIN37, LIN52 and LIN54 form a subcomplex that binds to MYBL2. Interacts with RINT1. Interacts with PML (isoform PML-1, isoform PML-2, isoform PML-3, isoform PML-4 and isoform PML-5). Interacts with RBBP9. Interacts with CD53. In terms of assembly, (Microbial infection) Interacts with JC virus small t antigen. Post-translationally, during G0 and early G1 phase of the cell cycle, phosphorylated on Ser-639 and on 5 sites within the domain B. Phosphorylation on Ser-672 in G1 leads to its ubiquitin-dependent proteolysis.

It localises to the nucleus. Functionally, key regulator of entry into cell division. Directly involved in heterochromatin formation by maintaining overall chromatin structure and, in particular, that of constitutive heterochromatin by stabilizing histone methylation. Recruits and targets histone methyltransferases KMT5B and KMT5C, leading to epigenetic transcriptional repression. Controls histone H4 'Lys-20' trimethylation. Probably acts as a transcription repressor by recruiting chromatin-modifying enzymes to promoters. Potent inhibitor of E2F-mediated trans-activation, associates preferentially with E2F5. Binds to cyclins A and E. Binds to and may be involved in the transforming capacity of the adenovirus E1A protein. May act as a tumor suppressor. The protein is Retinoblastoma-like protein 2 (RBL2) of Homo sapiens (Human).